The primary structure comprises 329 residues: Octaprenyl diphosphate synthase (329 aa).

Residues K51, R54, and H83 each contribute to the isopentenyl diphosphate site. Positions 90 and 94 each coordinate Mg(2+). Residue R99 participates in an all-trans-polyprenyl diphosphate binding. R100 is a binding site for isopentenyl diphosphate. Residues K176, T177, and Q214 each coordinate an all-trans-polyprenyl diphosphate.

This sequence belongs to the FPP/GGPP synthase family. It depends on Mg(2+) as a cofactor.

It carries out the reaction 5 isopentenyl diphosphate + (2E,6E)-farnesyl diphosphate = all-trans-octaprenyl diphosphate + 5 diphosphate. Functionally, supplies octaprenyl diphosphate, the precursor for the side chain of the isoprenoid quinones ubiquinone and menaquinone. This chain is Octaprenyl diphosphate synthase (ispB), found in Haemophilus influenzae (strain ATCC 51907 / DSM 11121 / KW20 / Rd).